The primary structure comprises 660 residues: Leucine-rich repeat transmembrane protein FLRT2 (660 aa).

A signal peptide spans 1–35 (MGLQTTKWPGRGAFILKFWLIISLGLYLQVSKLLA). Intrachain disulfides connect Cys-36-Cys-42 and Cys-40-Cys-49. Residues 36–63 (CPSVCRCDRNFVYCNERSLTSVPLGIPE) enclose the LRRNT domain. Topologically, residues 36-540 (CPSVCRCDRN…QTTSHSMGSP (505 aa)) are extracellular. LRR repeat units lie at residues 62 to 87 (PEGV…LHNV), 88 to 108 (QSVH…MNLP), 109 to 131 (KNVR…ALAQ), 132 to 157 (LLKL…AFRE), 159 to 181 (ISLK…LPVD), 183 to 202 (QELR…AFQN), 203 to 228 (LTSL…TFSH), 229 to 251 (LTKL…DLPG), 252 to 274 (THLI…AFAN), and 275 to 298 (LRKL…VFDH). Asn-202 carries an N-linked (GlcNAc...) asparagine glycan. The LRRCT domain maps to 310–362 (NPWFCDCSIKWVTEWLKYIPSSLNVRGFMCQGPEQVRGMAVRELNMNLLSCPT). Intrachain disulfides connect Cys-314–Cys-339 and Cys-316–Cys-360. Residues 371–396 (TPAPSTVSPTTQSPTLSVPSPSRGSV) are compositionally biased toward low complexity. The tract at residues 371-413 (TPAPSTVSPTTQSPTLSVPSPSRGSVPPAPTPSKLPTIPDWDG) is disordered. Residues 419 to 517 (PPISERIQLS…ICSEATTHAS (99 aa)) enclose the Fibronectin type-III domain. A helical transmembrane segment spans residues 541–561 (FLLAGLIGGAVIFVLVVLLSV). The Cytoplasmic portion of the chain corresponds to 562–660 (FCWHMHKKGR…SVPDLEHCHT (99 aa)).

In terms of assembly, self-associates (via leucine-rich repeats), giving rise to homooligomers. Interacts with FGFR1. Interacts with FGFR2. Interacts (via extracellular domain) with ADGRL1/LPHN1. Interacts (via extracellular domain) with ADGRL3 (via olfactomedin-like domain). Interacts (via extracellular domain) with UNC5D (via the first Ig-like domain). Can also interact (via extracellular domain) with UNC5B, but with much lower affinity. Interacts (via extracellular domain) with FN1. Post-translationally, N-glycosylated. In terms of processing, proteolytic cleavage in the juxtamembrane region gives rise to a soluble ectodomain. Cleavage is probably effected by a metalloprotease. As to expression, detected in adult brain (at protein level).

It is found in the cell membrane. It localises to the endoplasmic reticulum membrane. The protein resides in the cell junction. The protein localises to the focal adhesion. Its subcellular location is the secreted. It is found in the extracellular space. It localises to the extracellular matrix. The protein resides in the synapse. The protein localises to the synaptosome. Its subcellular location is the microsome membrane. Its function is as follows. Functions in cell-cell adhesion, cell migration and axon guidance. Mediates cell-cell adhesion via its interactions with ADGRL3 and probably also other latrophilins that are expressed at the surface of adjacent cells. May play a role in the migration of cortical neurons during brain development via its interaction with UNC5D. Mediates axon growth cone collapse and plays a repulsive role in neuron guidance via its interaction with UNC5D, and possibly also other UNC-5 family members. Plays a role in fibroblast growth factor-mediated signaling cascades. Required for normal organization of the cardiac basement membrane during embryogenesis, and for normal embryonic epicardium and heart morphogenesis. The protein is Leucine-rich repeat transmembrane protein FLRT2 of Mus musculus (Mouse).